Consider the following 991-residue polypeptide: Translation initiation factor IF-2 (991 aa).

Disordered regions lie at residues 53–85, 97–175, and 312–395; these read SHGTSGADRKKITLTKKSTSEIKQADASGKART, VKRD…EAAE, and GIKG…DRGG. Basic and acidic residues-rich tracts occupy residues 97 to 113 and 125 to 175; these read VKRDDPTGASSESHDSQ and ELQR…EAAE. The segment covering 323–338 has biased composition (low complexity); it reads AAGAPAPGAAPGAAAK. The segment covering 339–349 has biased composition (basic and acidic residues); it reads PGEKKSVKSEK. The region spanning 491–658 is the tr-type G domain; the sequence is PRPPVVTVMG…QVLLQAEVLE (168 aa). The interval 500–507 is G1; it reads GHVDHGKT. 500–507 is a binding site for GTP; that stretch reads GHVDHGKT. The interval 525–529 is G2; that stretch reads GITQH. The tract at residues 546-549 is G3; the sequence is DTPG. Residues 546–550 and 600–603 each bind GTP; these read DTPGH and NKID. Positions 600–603 are G4; the sequence is NKID. The interval 636–638 is G5; the sequence is SAK.

Belongs to the TRAFAC class translation factor GTPase superfamily. Classic translation factor GTPase family. IF-2 subfamily.

The protein localises to the cytoplasm. Functionally, one of the essential components for the initiation of protein synthesis. Protects formylmethionyl-tRNA from spontaneous hydrolysis and promotes its binding to the 30S ribosomal subunits. Also involved in the hydrolysis of GTP during the formation of the 70S ribosomal complex. This Leptothrix cholodnii (strain ATCC 51168 / LMG 8142 / SP-6) (Leptothrix discophora (strain SP-6)) protein is Translation initiation factor IF-2.